Reading from the N-terminus, the 115-residue chain is U3-lycotoxin-Ls1a (115 aa).

An N-terminal signal peptide occupies residues 1–20; the sequence is MKFVLLFGVFLVTLFSYSSA. Positions 21-44 are excised as a propeptide; it reads EMLDDFDQAAEDELLSLIEKEEAR. 4 disulfides stabilise this stretch: cysteine 48-cysteine 63, cysteine 55-cysteine 72, cysteine 62-cysteine 87, and cysteine 74-cysteine 85.

The protein belongs to the neurotoxin 19 (CSTX) family. 01 subfamily. In terms of tissue distribution, expressed by the venom gland.

It localises to the secreted. The sequence is that of U3-lycotoxin-Ls1a from Lycosa singoriensis (Wolf spider).